A 314-amino-acid chain; its full sequence is tRNA dimethylallyltransferase (314 aa).

Position 13 to 20 (13 to 20 (GPTAIGKT)) interacts with ATP. 15–20 (TAIGKT) lines the substrate pocket. An interaction with substrate tRNA region spans residues 38 to 41 (DSMQ).

It belongs to the IPP transferase family. Monomer. Mg(2+) serves as cofactor.

It catalyses the reaction adenosine(37) in tRNA + dimethylallyl diphosphate = N(6)-dimethylallyladenosine(37) in tRNA + diphosphate. Functionally, catalyzes the transfer of a dimethylallyl group onto the adenine at position 37 in tRNAs that read codons beginning with uridine, leading to the formation of N6-(dimethylallyl)adenosine (i(6)A). The chain is tRNA dimethylallyltransferase from Desulfotalea psychrophila (strain LSv54 / DSM 12343).